A 324-amino-acid polypeptide reads, in one-letter code: Olfactory receptor 1L3 (324 aa).

Over 1 to 25 (MGMSNLTRLSEFILLGLSSRSEDQR) the chain is Extracellular. N-linked (GlcNAc...) asparagine glycosylation is present at Asn-5. A helical transmembrane segment spans residues 26 to 49 (PLFALFLIIYLVTLMGNLLIILAI). The Cytoplasmic segment spans residues 50–57 (HSDPRLQN). Residues 58 to 79 (PMYFFLSILSFADICYTTVIVP) form a helical membrane-spanning segment. At 80–100 (KMLVNFLSEKKTISYAECLAQ) the chain is on the extracellular side. A disulfide bridge links Cys-97 with Cys-189. The chain crosses the membrane as a helical span at residues 101–120 (MYFFLVFGNIDSYLLAAMAI). The Cytoplasmic segment spans residues 121–139 (NRCVAICNPFHYVTVMNRR). A helical transmembrane segment spans residues 140–158 (CCVLLLAFPITFSYFHSLL). Topologically, residues 159-196 (HVLLVNRLTFCTSNVIHHFFCDVNPVLKLSCSSTFVNE) are extracellular. The helical transmembrane segment at 197-219 (IVAMTEGLASVMAPFVCIIISYL) threads the bilayer. At 220-236 (RILIAVLKIPSAAGKHK) the chain is on the cytoplasmic side. The chain crosses the membrane as a helical span at residues 237-259 (AFSTCSSHLTVVILFYGSISYVY). At 260–271 (LQPLSSYTVKDR) the chain is on the extracellular side. A helical membrane pass occupies residues 272–291 (IATINYTVLTSVLNPFIYSL). At 292–324 (RNKDMKRGLQKLINKIKSQMSRFSTKTNKICGP) the chain is on the cytoplasmic side.

Belongs to the G-protein coupled receptor 1 family.

Its subcellular location is the cell membrane. Functionally, odorant receptor. The polypeptide is Olfactory receptor 1L3 (OR1L3) (Homo sapiens (Human)).